Here is an 85-residue protein sequence, read N- to C-terminus: Cell division topological specificity factor (85 aa).

It belongs to the MinE family.

Functionally, prevents the cell division inhibition by proteins MinC and MinD at internal division sites while permitting inhibition at polar sites. This ensures cell division at the proper site by restricting the formation of a division septum at the midpoint of the long axis of the cell. This is Cell division topological specificity factor from Xanthomonas euvesicatoria pv. vesicatoria (strain 85-10) (Xanthomonas campestris pv. vesicatoria).